The primary structure comprises 422 residues: Tyrosine--tRNA ligase (422 aa).

Tyr-37 is a binding site for L-tyrosine. The 'HIGH' region signature appears at 42 to 51 (PTEESLHIGH). Residues Tyr-175 and Gln-179 each contribute to the L-tyrosine site. Positions 235-239 (KFGKT) match the 'KMSKS' region motif. ATP is bound at residue Lys-238. Positions 357 to 414 (KDLQEALVLTSLAQSRTQAKNMIISNSISINTEKIRKNHIFHEKDKLFGKFTLLSRGK) constitute an S4 RNA-binding domain.

Belongs to the class-I aminoacyl-tRNA synthetase family. TyrS type 1 subfamily. Homodimer.

Its subcellular location is the cytoplasm. It catalyses the reaction tRNA(Tyr) + L-tyrosine + ATP = L-tyrosyl-tRNA(Tyr) + AMP + diphosphate + H(+). Functionally, catalyzes the attachment of tyrosine to tRNA(Tyr) in a two-step reaction: tyrosine is first activated by ATP to form Tyr-AMP and then transferred to the acceptor end of tRNA(Tyr). This is Tyrosine--tRNA ligase from Buchnera aphidicola subsp. Acyrthosiphon pisum (strain Tuc7).